Reading from the N-terminus, the 245-residue chain is Deoxyadenosine kinase (245 aa).

An ATP-binding site is contributed by 28-36 (GLIGAGKTT). Substrate is bound by residues glutamate 52, tyrosine 64, and glutamine 75. The active-site Proton acceptor is aspartate 99. Residues arginine 100, aspartate 105, and glutamate 165 each contribute to the substrate site.

Belongs to the DCK/DGK family.

It carries out the reaction 2'-deoxyadenosine + ATP = dAMP + ADP + H(+). Specific kinase that phosphorylates deoxyadenosine but not any other deoxyribonucleoside, as part of the deoxyribonucleotide salvage pathway. This chain is Deoxyadenosine kinase (dak), found in Dictyostelium discoideum (Social amoeba).